The sequence spans 115 residues: Cytochrome c oxidase subunit 3 (115 aa).

A run of 2 helical transmembrane segments spans residues 32–52 and 70–90; these read CLQGLLFTVLLGLYFSFLQGL and FFLATGFHGLHVLIGTIFLMI.

The protein belongs to the cytochrome c oxidase subunit 3 family. In terms of assembly, component of the cytochrome c oxidase (complex IV, CIV), a multisubunit enzyme composed of a catalytic core of 3 subunits and several supernumerary subunits. The complex exists as a monomer or a dimer and forms supercomplexes (SCs) in the inner mitochondrial membrane with ubiquinol-cytochrome c oxidoreductase (cytochrome b-c1 complex, complex III, CIII).

The protein resides in the mitochondrion inner membrane. The catalysed reaction is 4 Fe(II)-[cytochrome c] + O2 + 8 H(+)(in) = 4 Fe(III)-[cytochrome c] + 2 H2O + 4 H(+)(out). Component of the cytochrome c oxidase, the last enzyme in the mitochondrial electron transport chain which drives oxidative phosphorylation. The respiratory chain contains 3 multisubunit complexes succinate dehydrogenase (complex II, CII), ubiquinol-cytochrome c oxidoreductase (cytochrome b-c1 complex, complex III, CIII) and cytochrome c oxidase (complex IV, CIV), that cooperate to transfer electrons derived from NADH and succinate to molecular oxygen, creating an electrochemical gradient over the inner membrane that drives transmembrane transport and the ATP synthase. Cytochrome c oxidase is the component of the respiratory chain that catalyzes the reduction of oxygen to water. Electrons originating from reduced cytochrome c in the intermembrane space (IMS) are transferred via the dinuclear copper A center (CU(A)) of subunit 2 and heme A of subunit 1 to the active site in subunit 1, a binuclear center (BNC) formed by heme A3 and copper B (CU(B)). The BNC reduces molecular oxygen to 2 water molecules using 4 electrons from cytochrome c in the IMS and 4 protons from the mitochondrial matrix. This is Cytochrome c oxidase subunit 3 (COIII) from Artemia salina (Brine shrimp).